A 111-amino-acid polypeptide reads, in one-letter code: MNIGEAILFKYPTADPTKDFIVQNNGDGTPSYIAEWNIRAPIPTEAELKTWWEELQSTSAYEPPVQVDLLARELSQEKLARKQLEELNQTLGSELSKIKLQLLTLQGGQGS.

It to B.subtilis XkdW.

This is an uncharacterized protein from Bacillus subtilis (strain 168).